The chain runs to 31 residues: Cytochrome b6-f complex subunit 6 (31 aa).

The chain crosses the membrane as a helical span at residues 4-24 (ITSYFGFLLAALTITPALFIG).

Belongs to the PetL family. In terms of assembly, the 4 large subunits of the cytochrome b6-f complex are cytochrome b6, subunit IV (17 kDa polypeptide, PetD), cytochrome f and the Rieske protein, while the 4 small subunits are PetG, PetL, PetM and PetN. The complex functions as a dimer.

It localises to the plastid. It is found in the chloroplast thylakoid membrane. Functionally, component of the cytochrome b6-f complex, which mediates electron transfer between photosystem II (PSII) and photosystem I (PSI), cyclic electron flow around PSI, and state transitions. PetL is important for photoautotrophic growth as well as for electron transfer efficiency and stability of the cytochrome b6-f complex. This Saccharum barberi (Indian sugarcane) protein is Cytochrome b6-f complex subunit 6.